The chain runs to 404 residues: 2,3-diketo-5-methylthiopentyl-1-phosphate enolase (404 aa).

Lys91 (proton acceptor) is an active-site residue. Residues Lys140, 166 to 169, His257, Gly329, and 351 to 352 each bind substrate; these read KDDE and GG. Mg(2+)-binding residues include Lys166, Asp168, and Glu169. Lys166 is modified (N6-carboxylysine).

It belongs to the RuBisCO large chain family. Type IV subfamily. As to quaternary structure, homodimer. Mg(2+) is required as a cofactor.

The enzyme catalyses 5-methylsulfanyl-2,3-dioxopentyl phosphate = 2-hydroxy-5-methylsulfanyl-3-oxopent-1-enyl phosphate. It functions in the pathway amino-acid biosynthesis; L-methionine biosynthesis via salvage pathway; L-methionine from S-methyl-5-thio-alpha-D-ribose 1-phosphate: step 3/6. In terms of biological role, catalyzes the enolization of 2,3-diketo-5-methylthiopentyl-1-phosphate (DK-MTP-1-P) into 2-hydroxy-3-keto-5-methylthiopentenyl-1-phosphate (HK-MTPenyl-1-P). The protein is 2,3-diketo-5-methylthiopentyl-1-phosphate enolase of Bacillus velezensis (strain DSM 23117 / BGSC 10A6 / LMG 26770 / FZB42) (Bacillus amyloliquefaciens subsp. plantarum).